Reading from the N-terminus, the 339-residue chain is Ribosomal RNA small subunit methyltransferase H (339 aa).

Residues 36–38 (GGY), D55, F82, D103, and Q110 contribute to the S-adenosyl-L-methionine site. The disordered stretch occupies residues 286 to 319 (GPIGPSEAEATANPRARSAKLRAGERTDAPIPEP).

The protein belongs to the methyltransferase superfamily. RsmH family.

It is found in the cytoplasm. The enzyme catalyses cytidine(1402) in 16S rRNA + S-adenosyl-L-methionine = N(4)-methylcytidine(1402) in 16S rRNA + S-adenosyl-L-homocysteine + H(+). Specifically methylates the N4 position of cytidine in position 1402 (C1402) of 16S rRNA. This is Ribosomal RNA small subunit methyltransferase H from Methylobacterium nodulans (strain LMG 21967 / CNCM I-2342 / ORS 2060).